Consider the following 260-residue polypeptide: Chlorocatechol 1,2-dioxygenase (260 aa).

Residues Tyr130, Tyr164, His188, and His190 each coordinate Fe cation.

It belongs to the intradiol ring-cleavage dioxygenase family. Requires Fe(3+) as cofactor.

The catalysed reaction is 3-chlorocatechol + O2 = (2E,4Z)-2-chloromuconate + 2 H(+). The enzyme catalyses 3,5-dichlorocatechol + O2 = (2E,4E)-2,4-dichloromuconate + 2 H(+). It participates in aromatic compound metabolism; 3-chlorocatechol degradation. Functionally, preferentially converts 3-chlorocatechol and 3,5-dichlorocatechol as opposed to other chlorinated catechols. Retains diminished activity toward non-chlorinated substrates. In Pseudomonas putida (Arthrobacter siderocapsulatus), this protein is Chlorocatechol 1,2-dioxygenase (clcA).